The primary structure comprises 151 residues: Deoxyuridine 5'-triphosphate nucleotidohydrolase (151 aa).

Substrate is bound by residues 70 to 72, Asn-83, 87 to 89, and Met-97; these read RSG and LID.

The protein belongs to the dUTPase family. Mg(2+) serves as cofactor.

It carries out the reaction dUTP + H2O = dUMP + diphosphate + H(+). Its pathway is pyrimidine metabolism; dUMP biosynthesis; dUMP from dCTP (dUTP route): step 2/2. Its function is as follows. This enzyme is involved in nucleotide metabolism: it produces dUMP, the immediate precursor of thymidine nucleotides and it decreases the intracellular concentration of dUTP so that uracil cannot be incorporated into DNA. In Azotobacter vinelandii (strain DJ / ATCC BAA-1303), this protein is Deoxyuridine 5'-triphosphate nucleotidohydrolase.